The following is a 333-amino-acid chain: LRGKEDAANNYARGHYTVGKELIEVCADRIRKLADQCEGLQGFLVFHSVGGGTGSGFGSLLLQRLALEYGGKKSKLDFCVYPSPQVSTSVVEPYNSVLSTHSLLEHTDVSFMLDNEAIYNICKKSLDIEKPTYTNLNRLIAQVISSLTSSLRFPGPLNLDINDIQTNLVPFPRLHFVLCSYAPVISKEKSEHENITVDAITNSVFSENNIMAKCQPHLGKYMACCLMYRGNIVPKEAQKAVQNIRNEKSKTVSFVDWSPTGFKCGINNSKPTTVLGENGDNMARTEKSVCMLSNTTAISQVFSRINHKFDLMYIKRAFVHWYVGEGMEEGEGL.

Residues Ser-48, Gly-52, Thr-53, Thr-88, Asn-115, and Asn-137 each contribute to the GTP site.

This sequence belongs to the tubulin family. As to quaternary structure, dimer of alpha and beta chains. A typical microtubule is a hollow water-filled tube with an outer diameter of 25 nm and an inner diameter of 15 nM. Alpha-beta heterodimers associate head-to-tail to form protofilaments running lengthwise along the microtubule wall with the beta-tubulin subunit facing the microtubule plus end conferring a structural polarity. Microtubules usually have 13 protofilaments but different protofilament numbers can be found in some organisms and specialized cells. The cofactor is Mg(2+). Post-translationally, undergoes a tyrosination/detyrosination cycle, the cyclic removal and re-addition of a C-terminal tyrosine residue by the enzymes tubulin tyrosine carboxypeptidase (TTCP) and tubulin tyrosine ligase (TTL), respectively.

It is found in the cytoplasm. The protein localises to the cytoskeleton. The catalysed reaction is GTP + H2O = GDP + phosphate + H(+). Its function is as follows. Tubulin is the major constituent of microtubules, a cylinder consisting of laterally associated linear protofilaments composed of alpha- and beta-tubulin heterodimers. Microtubules grow by the addition of GTP-tubulin dimers to the microtubule end, where a stabilizing cap forms. Below the cap, tubulin dimers are in GDP-bound state, owing to GTPase activity of alpha-tubulin. This Dictyostelium purpureum (Slime mold) protein is Tubulin alpha chain (tuba).